The primary structure comprises 73 residues: Dipeptidyl peptidase 3 (73 aa).

Belongs to the peptidase M49 family. Zn(2+) is required as a cofactor.

It localises to the membrane. The enzyme catalyses Release of an N-terminal dipeptide from a peptide comprising four or more residues, with broad specificity. Also acts on dipeptidyl 2-naphthylamides.. Its function is as follows. Degrades neuropeptide proctolin (RYLPT) by cleavage between Tyr and Leu residues. This Blaberus craniifer (Death's head cockroach) protein is Dipeptidyl peptidase 3.